A 158-amino-acid polypeptide reads, in one-letter code: Large ribosomal subunit protein uL15 (158 aa).

Positions 1 to 13 (MKLNEIKDNEGST) are enriched in basic and acidic residues. The interval 1-45 (MKLNEIKDNEGSTHSRKRLGRGIGSGSGKTGGRGVKGQKSRSGVA) is disordered. Positions 21–35 (RGIGSGSGKTGGRGV) are enriched in gly residues.

It belongs to the universal ribosomal protein uL15 family. As to quaternary structure, part of the 50S ribosomal subunit.

Binds to the 23S rRNA. The protein is Large ribosomal subunit protein uL15 of Rhizobium johnstonii (strain DSM 114642 / LMG 32736 / 3841) (Rhizobium leguminosarum bv. viciae).